A 433-amino-acid polypeptide reads, in one-letter code: tRNA-2-methylthio-N(6)-dimethylallyladenosine synthase (433 aa).

The region spanning 4–119 is the MTTase N-terminal domain; that stretch reads KKLFIQTLGC…ITQAIKTPKF (116 aa). [4Fe-4S] cluster contacts are provided by Cys-13, Cys-50, Cys-82, Cys-151, Cys-155, and Cys-158. A Radical SAM core domain is found at 137–370; it reads RNSIYKSYIN…QNRHSEILDE (234 aa). A TRAM domain is found at 373-433; that stretch reads KKQENKTFKV…KRMVLYGEII (61 aa).

The protein belongs to the methylthiotransferase family. MiaB subfamily. In terms of assembly, monomer. [4Fe-4S] cluster serves as cofactor.

The protein resides in the cytoplasm. It catalyses the reaction N(6)-dimethylallyladenosine(37) in tRNA + (sulfur carrier)-SH + AH2 + 2 S-adenosyl-L-methionine = 2-methylsulfanyl-N(6)-dimethylallyladenosine(37) in tRNA + (sulfur carrier)-H + 5'-deoxyadenosine + L-methionine + A + S-adenosyl-L-homocysteine + 2 H(+). Functionally, catalyzes the methylthiolation of N6-(dimethylallyl)adenosine (i(6)A), leading to the formation of 2-methylthio-N6-(dimethylallyl)adenosine (ms(2)i(6)A) at position 37 in tRNAs that read codons beginning with uridine. This chain is tRNA-2-methylthio-N(6)-dimethylallyladenosine synthase, found in Campylobacter jejuni subsp. doylei (strain ATCC BAA-1458 / RM4099 / 269.97).